The sequence spans 72 residues: Sec-independent protein translocase protein TatA (72 aa).

A helical membrane pass occupies residues 1–21 (MLGGISIWQLLIVLAILVLIF).

Belongs to the TatA/E family. The Tat system comprises two distinct complexes: a TatABC complex, containing multiple copies of TatA, TatB and TatC subunits, and a separate TatA complex, containing only TatA subunits. Substrates initially bind to the TatABC complex, which probably triggers association of the separate TatA complex to form the active translocon.

Its subcellular location is the cell inner membrane. Part of the twin-arginine translocation (Tat) system that transports large folded proteins containing a characteristic twin-arginine motif in their signal peptide across membranes. TatA could form the protein-conducting channel of the Tat system. The sequence is that of Sec-independent protein translocase protein TatA from Marinomonas sp. (strain MWYL1).